The following is a 277-amino-acid chain: tRNA uridine(34) hydroxylase (277 aa).

Positions 126–221 (SSPDVHVIDT…YLETVRGDDS (96 aa)) constitute a Rhodanese domain. Residue Cys181 is the Cysteine persulfide intermediate of the active site.

Belongs to the TrhO family.

It carries out the reaction uridine(34) in tRNA + AH2 + O2 = 5-hydroxyuridine(34) in tRNA + A + H2O. Its function is as follows. Catalyzes oxygen-dependent 5-hydroxyuridine (ho5U) modification at position 34 in tRNAs. This Anaplasma marginale (strain Florida) protein is tRNA uridine(34) hydroxylase.